The primary structure comprises 172 residues: uncharacterized protein (172 aa).

The Ferritin-like diiron domain maps to 1–148 (MANSQKVIDV…TIHDFFENGN (148 aa)).

This is an uncharacterized protein from Ureaplasma urealyticum (Ureaplasma urealyticum biotype 2).